Reading from the N-terminus, the 285-residue chain is Protoheme IX farnesyltransferase (285 aa).

9 helical membrane passes run L13–A33, L40–I60, E89–N109, I110–L130, L137–L157, G165–L185, A194–I214, L218–F238, and F265–I285.

The protein belongs to the UbiA prenyltransferase family. Protoheme IX farnesyltransferase subfamily.

The protein localises to the cell membrane. The catalysed reaction is heme b + (2E,6E)-farnesyl diphosphate + H2O = Fe(II)-heme o + diphosphate. Its pathway is porphyrin-containing compound metabolism; heme O biosynthesis; heme O from protoheme: step 1/1. Converts heme B (protoheme IX) to heme O by substitution of the vinyl group on carbon 2 of heme B porphyrin ring with a hydroxyethyl farnesyl side group. The polypeptide is Protoheme IX farnesyltransferase (Saccharolobus islandicus (strain Y.G.57.14 / Yellowstone #1) (Sulfolobus islandicus)).